The following is a 75-amino-acid chain: Sec-independent protein translocase protein TatA (75 aa).

Residues 1 to 21 (MGSFSIWHWLIVLVIIALVFG) traverse the membrane as a helical segment. Residues 45 to 75 (DASADKPADQVTQQRVSDDTIDVQAKEKSNS) form a disordered region.

Belongs to the TatA/E family. The Tat system comprises two distinct complexes: a TatABC complex, containing multiple copies of TatA, TatB and TatC subunits, and a separate TatA complex, containing only TatA subunits. Substrates initially bind to the TatABC complex, which probably triggers association of the separate TatA complex to form the active translocon.

It is found in the cell inner membrane. Its function is as follows. Part of the twin-arginine translocation (Tat) system that transports large folded proteins containing a characteristic twin-arginine motif in their signal peptide across membranes. TatA could form the protein-conducting channel of the Tat system. This is Sec-independent protein translocase protein TatA from Bordetella bronchiseptica (strain ATCC BAA-588 / NCTC 13252 / RB50) (Alcaligenes bronchisepticus).